An 888-amino-acid polypeptide reads, in one-letter code: Autophagy-related protein 9 (888 aa).

Residues 1 to 170 (MASNIFSRIK…PYTTPMGPQP (170 aa)) form a disordered region. Topologically, residues 1–255 (MASNIFSRIK…CTRKMSGLWN (255 aa)) are cytoplasmic. Polar residues predominate over residues 13 to 24 (SGGSQSFYQQLR). The segment covering 28–38 (DPEYDPGLDEE) has biased composition (acidic residues). Polar residues predominate over residues 123 to 143 (RATNPGSSRTPASVGPSSART). The chain crosses the membrane as a helical span at residues 256-276 (FAIWLYTFFFIWKCVQYFVEI). The Lumenal portion of the chain corresponds to 277-422 (RRLTYIRDFY…RLLSQKLRQR (146 aa)). The chain crosses the membrane as a helical span at residues 423–443 (FLFAGFLNLLFAPVVLAYVVI). At 444 to 511 (VYFFTYYYEY…PKRITEAVAR (68 aa)) the chain is on the cytoplasmic side. An intramembrane segment occupies 512 to 532 (TIAFMSGAITAILAIGSVLDS). The Cytoplasmic segment spans residues 533 to 544 (ELFLNFEITKDR). A helical membrane pass occupies residues 545–565 (PVIFYLGVFAAIWATTRGMVS). Over 566-611 (EETLVFNPEYALRNVIEYTRYVPDHWKNKLHSSEVKQEFSELYKMK) the chain is Lumenal. A helical transmembrane segment spans residues 612 to 632 (VVIFLEEMMGIVTTPMLLLFS). Topologically, residues 633–642 (LPRCSDQIVD) are cytoplasmic. The stretch at 643–663 (FFREFTIHVDGLGYVCSFAVF) is an intramembrane region. Residues 664–888 (DFQKGPGNTG…QRPRRGGGMV (225 aa)) lie on the Cytoplasmic side of the membrane. Disordered regions lie at residues 748-770 (GRTGTETGRARSRAPGGRGPRIG) and 834-866 (EPGGALGESVWETSPARGVTRENSAANTEDPEA).

Belongs to the ATG9 family. As to quaternary structure, homotrimer; forms a homotrimer with a central pore that forms a path between the two membrane leaflets. In terms of processing, phosphorylated by ATG1. ATG1 phosphorylation is required for ATG18 interaction and preautophagosome elongation.

It is found in the preautophagosomal structure membrane. The protein resides in the cytoplasmic vesicle membrane. The protein localises to the golgi apparatus membrane. Its subcellular location is the endoplasmic reticulum membrane. The catalysed reaction is a 1,2-diacyl-sn-glycero-3-phosphocholine(in) = a 1,2-diacyl-sn-glycero-3-phosphocholine(out). The enzyme catalyses a 1,2-diacyl-sn-glycero-3-phospho-L-serine(in) = a 1,2-diacyl-sn-glycero-3-phospho-L-serine(out). It catalyses the reaction a 1,2-diacyl-sn-glycero-3-phosphoethanolamine(in) = a 1,2-diacyl-sn-glycero-3-phosphoethanolamine(out). It carries out the reaction a 1,2-diacyl-sn-glycero-3-phospho-(1D-myo-inositol-3-phosphate)(in) = a 1,2-diacyl-sn-glycero-3-phospho-(1D-myo-inositol-3-phosphate)(out). Functionally, phospholipid scramblase involved in autophagy and cytoplasm to vacuole transport (Cvt) vesicle formation. Cycles between the preautophagosomal structure/phagophore assembly site (PAS) and the cytoplasmic vesicle pool and supplies membrane for the growing autophagosome. Lipid scramblase activity plays a key role in preautophagosomal structure/phagophore assembly by distributing the phospholipids that arrive through ATG2 from the cytoplasmic to the luminal leaflet of the bilayer, thereby driving autophagosomal membrane expansion. Required for mitophagy. Also involved in endoplasmic reticulum-specific autophagic process and is essential for the survival of cells subjected to severe ER stress. Different machineries are required for anterograde trafficking to the PAS during either the Cvt pathway or bulk autophagy and for retrograde trafficking. Autophagy is required for proper vegetative growth, asexual/sexual reproduction, and full virulence. Autophagy is particularly involved in the biosynthesis of deoxynivalenol (DON), an important virulence determinant. Required for aerial hyphae development and lipid droplet degradation in response to starvation. The polypeptide is Autophagy-related protein 9 (Gibberella zeae (strain ATCC MYA-4620 / CBS 123657 / FGSC 9075 / NRRL 31084 / PH-1) (Wheat head blight fungus)).